Consider the following 552-residue polypeptide: uncharacterized protein (552 aa).

Residues 8–200 (KLFADMIIQG…LLCVYEGFLK (193 aa)) form the DhaL domain.

This is an uncharacterized protein from Staphylococcus haemolyticus (strain JCSC1435).